Consider the following 158-residue polypeptide: Pyruvoyl-dependent arginine decarboxylase (158 aa).

S44 is subject to Pyruvic acid (Ser).

This sequence belongs to the PdaD family. Pyruvate serves as cofactor.

The enzyme catalyses L-arginine + H(+) = agmatine + CO2. The protein is Pyruvoyl-dependent arginine decarboxylase of Thermococcus sibiricus (strain DSM 12597 / MM 739).